We begin with the raw amino-acid sequence, 299 residues long: Tetrahydromethanopterin S-methyltransferase subunit E (299 aa).

6 helical membrane-spanning segments follow: residues 57-79, 95-115, 133-153, 158-178, 237-257, and 262-282; these read AISG…AWAL, GVAA…RTVG, IGPI…AAYL, LGNP…VGAI, GLCF…GNII, and VTKT…AAGI.

The protein belongs to the MtrE family. In terms of assembly, the complex is composed of 8 subunits; MtrA, MtrB, MtrC, MtrD, MtrE, MtrF, MtrG and MtrH.

It is found in the cell membrane. It catalyses the reaction 5-methyl-5,6,7,8-tetrahydromethanopterin + coenzyme M + 2 Na(+)(in) = 5,6,7,8-tetrahydromethanopterin + methyl-coenzyme M + 2 Na(+)(out). It functions in the pathway one-carbon metabolism; methanogenesis from CO(2); methyl-coenzyme M from 5,10-methylene-5,6,7,8-tetrahydromethanopterin: step 2/2. Part of a complex that catalyzes the formation of methyl-coenzyme M and tetrahydromethanopterin from coenzyme M and methyl-tetrahydromethanopterin. This is an energy-conserving, sodium-ion translocating step. The chain is Tetrahydromethanopterin S-methyltransferase subunit E from Methanococcus maripaludis (strain C5 / ATCC BAA-1333).